Reading from the N-terminus, the 445-residue chain is Gastrula zinc finger protein 5-1 (445 aa).

The segment at 1–38 is disordered; the sequence is MLQIKTEKEELDCGDDQNPKESSAVPLTDGASPEPQPQ. Phosphoserine; by CK2 is present on Ser-89. The segment at 185–210 adopts a C2H2-type 1; atypical zinc-finger fold; sequence FICCKCGDSFAHHSDLHTHLYACAGH. 7 C2H2-type zinc fingers span residues 239 to 261, 267 to 289, 295 to 317, 323 to 345, 351 to 373, 379 to 401, and 407 to 429; these read FKCTVCGKCFTLKNSLQLHHRIH, FTCTECGKSFAQSCSLQLHSRTH, YVCTECGKRFSSNSGLRRHMRTH, YACKECGKFFSDLSTLHRHQNSH, FICTECGKGFTLKDSLHRHQRTH, FICSQCGKSYSQSSNLIKHQMIH, and FSCSECGKCFAVKDGLRNHQRVH.

Its function is as follows. Binds to RNA homomers. This is Gastrula zinc finger protein 5-1 from Xenopus laevis (African clawed frog).